The primary structure comprises 1080 residues: DNA polymerase II large subunit (1080 aa).

The protein belongs to the archaeal DNA polymerase II family. In terms of assembly, heterodimer of a large subunit and a small subunit.

It carries out the reaction DNA(n) + a 2'-deoxyribonucleoside 5'-triphosphate = DNA(n+1) + diphosphate. It catalyses the reaction Exonucleolytic cleavage in the 3'- to 5'-direction to yield nucleoside 5'-phosphates.. Its function is as follows. Possesses two activities: a DNA synthesis (polymerase) and an exonucleolytic activity that degrades single-stranded DNA in the 3'- to 5'-direction. Has a template-primer preference which is characteristic of a replicative DNA polymerase. The chain is DNA polymerase II large subunit from Picrophilus torridus (strain ATCC 700027 / DSM 9790 / JCM 10055 / NBRC 100828 / KAW 2/3).